The following is a 357-amino-acid chain: MVDQATLDKLEAGFKKLQEASDCKSLLKKHLTKDVFDSIKNKKTGMGATLLDVIQSGVENLDSGVGIYAPDAESYRTFGPLFDPIIDDYHGGFKLTDKHPPKEWGDINTLVDLDPGGQFIISTRVRCGRSLQGYPFNPCLTAEQYKEMEEKVSSTLSSMEDELKGTYYPLTGMSKATQQQLIDDHFLFKEGDRFLQTANACRYWPTGRGIFHNDAKTFLVWVNEEDHLRIISMQKGGDLKTVYKRLVTAVDNIESKLPFSHDDRFGFLTFCPTNLGTTMRASVHIQLPKLAKDRKVLEDIASKFNLQVRGTRGEHTESEGGVYDISNKRRLGLTEYQAVREMQDGILEMIKMEKAAA.

The Phosphagen kinase N-terminal domain occupies 9–91; it reads KLEAGFKKLQ…FDPIIDDYHG (83 aa). Residue 64–68 coordinates substrate; that stretch reads GVGIY. The Phosphagen kinase C-terminal domain occupies 119–356; it reads FIISTRVRCG…LEMIKMEKAA (238 aa). ATP-binding positions include 122-126 and histidine 185; that span reads STRVR. Glutamate 225 contacts substrate. ATP is bound at residue arginine 229. A substrate-binding site is contributed by cysteine 271. Residues 280-284 and 309-314 contribute to the ATP site; these read RASVH and RGTRGE. Glutamate 314 contributes to the substrate binding site.

Belongs to the ATP:guanido phosphotransferase family. Monomer.

Its subcellular location is the cytoplasm. It carries out the reaction L-arginine + ATP = N(omega)-phospho-L-arginine + ADP + H(+). In terms of biological role, catalyzes the reversible transfer of the terminal phosphoryl group of ATP to L-arginine. This chain is Arginine kinase, found in Limulus polyphemus (Atlantic horseshoe crab).